Consider the following 343-residue polypeptide: Aspartate carbamoyltransferase catalytic subunit (343 aa).

Carbamoyl phosphate contacts are provided by Arg-91 and Thr-92. Lys-119 is an L-aspartate binding site. Carbamoyl phosphate contacts are provided by Arg-141, His-171, and Gln-174. Arg-204 and Arg-259 together coordinate L-aspartate. 2 residues coordinate carbamoyl phosphate: Gly-300 and Pro-301.

Belongs to the aspartate/ornithine carbamoyltransferase superfamily. ATCase family. As to quaternary structure, heterododecamer (2C3:3R2) of six catalytic PyrB chains organized as two trimers (C3), and six regulatory PyrI chains organized as three dimers (R2).

It carries out the reaction carbamoyl phosphate + L-aspartate = N-carbamoyl-L-aspartate + phosphate + H(+). It functions in the pathway pyrimidine metabolism; UMP biosynthesis via de novo pathway; (S)-dihydroorotate from bicarbonate: step 2/3. Functionally, catalyzes the condensation of carbamoyl phosphate and aspartate to form carbamoyl aspartate and inorganic phosphate, the committed step in the de novo pyrimidine nucleotide biosynthesis pathway. In Burkholderia orbicola (strain MC0-3), this protein is Aspartate carbamoyltransferase catalytic subunit.